Here is a 556-residue protein sequence, read N- to C-terminus: MPVNLGQALGLLPFLAKAEDATFSGSDVIQQRELANPETARQLFRQFRYQVMSGPQETLRQLRKLCFQWLRPEVHTKEQILEILMLEQFLTILPGEIQMWVRKQCPGSGEEAVTLVESLKGDPQKLWQWISIQVLGQEIPFEKENSARCRGDKVEPALEAEPTVEVVPQDLPLQNTSSAPGELLSHGVKEESDLEPELALAASQLPARPEERPTRDQEVGTALLPSLQEEQWRHLDSTQKEQYWDLMLETYGKMVSGVAGISNSKPDLTNMAEYGEELVGLHLHSAEKMARAPCKEDRQENDKENLNLENHRDQGCLDVFDQAPGEAPPQTALSDFFGESEPHHFGGESVPEALENLQGEGTGAHLFPHERGSGKQLGQHIQSSSSGELSALWLEEKREASQKGQARAPMAQKLPTCRECGKTFYRNSQLVFHQRTHTGETYFHCRICKKAFLRSSDFVKHQRTHTGEKPCKCDYCGKGFSDFSGLRHHEKIHTGEKPYKCPICEKSFIQRSNFNRHQRVHTGEKPYKCTHCGKRFSWSSSLDKHQRSHLGKKPCP.

An SCAN box domain is found at 41–123 (RQLFRQFRYQ…TLVESLKGDP (83 aa)). The tract at residues 169-195 (QDLPLQNTSSAPGELLSHGVKEESDLE) is disordered. Residues 218–291 (EVGTALLPSL…HLHSAEKMAR (74 aa)) form the KRAB domain. 5 C2H2-type zinc fingers span residues 415 to 437 (PTCR…QRTH), 443 to 465 (FHCR…QRTH), 471 to 493 (CKCD…EKIH), 499 to 521 (YKCP…QRVH), and 527 to 549 (YKCT…QRSH).

It belongs to the krueppel C2H2-type zinc-finger protein family.

The protein resides in the nucleus. May be involved in transcriptional regulation. The polypeptide is Zinc finger protein 18 (Znf18) (Rattus norvegicus (Rat)).